We begin with the raw amino-acid sequence, 557 residues long: Membrane protein insertase YidC (557 aa).

3 helical membrane-spanning segments follow: residues 371–391 (WGWS…PLSA), 437–457 (LGGC…YWVL), and 515–535 (PIVF…YWVV).

It belongs to the OXA1/ALB3/YidC family. Type 1 subfamily. As to quaternary structure, interacts with the Sec translocase complex via SecD. Specifically interacts with transmembrane segments of nascent integral membrane proteins during membrane integration.

It localises to the cell inner membrane. Functionally, required for the insertion and/or proper folding and/or complex formation of integral membrane proteins into the membrane. Involved in integration of membrane proteins that insert both dependently and independently of the Sec translocase complex, as well as at least some lipoproteins. Aids folding of multispanning membrane proteins. The protein is Membrane protein insertase YidC of Polynucleobacter necessarius subsp. necessarius (strain STIR1).